Reading from the N-terminus, the 1091-residue chain is Isoleucine--tRNA ligase (1091 aa).

A 'HIGH' region motif is present at residues 48–58; that stretch reads PFATGLPHFGH. The 'KMSKS' region signature appears at 625 to 629; it reads KMSKA. Residue Lys628 participates in ATP binding.

It belongs to the class-I aminoacyl-tRNA synthetase family. IleS type 2 subfamily. As to quaternary structure, monomer. Zn(2+) is required as a cofactor.

It is found in the cytoplasm. The enzyme catalyses tRNA(Ile) + L-isoleucine + ATP = L-isoleucyl-tRNA(Ile) + AMP + diphosphate. Catalyzes the attachment of isoleucine to tRNA(Ile). As IleRS can inadvertently accommodate and process structurally similar amino acids such as valine, to avoid such errors it has two additional distinct tRNA(Ile)-dependent editing activities. One activity is designated as 'pretransfer' editing and involves the hydrolysis of activated Val-AMP. The other activity is designated 'posttransfer' editing and involves deacylation of mischarged Val-tRNA(Ile). This chain is Isoleucine--tRNA ligase, found in Treponema pallidum (strain Nichols).